The chain runs to 192 residues: Small ribosomal subunit protein uS5 (192 aa).

Positions 22–85 (LVDKLVTINR…DRAKRAMIRV (64 aa)) constitute an S5 DRBM domain.

It belongs to the universal ribosomal protein uS5 family. As to quaternary structure, part of the 30S ribosomal subunit. Contacts proteins S4 and S8.

In terms of biological role, with S4 and S12 plays an important role in translational accuracy. Its function is as follows. Located at the back of the 30S subunit body where it stabilizes the conformation of the head with respect to the body. The protein is Small ribosomal subunit protein uS5 of Gluconacetobacter diazotrophicus (strain ATCC 49037 / DSM 5601 / CCUG 37298 / CIP 103539 / LMG 7603 / PAl5).